A 419-amino-acid polypeptide reads, in one-letter code: Tyrosine--tRNA ligase 1 (419 aa).

Tyr35 lines the L-tyrosine pocket. Residues 40–49 carry the 'HIGH' region motif; it reads PTAGSLHIGH. Residues Tyr172 and Gln176 each coordinate L-tyrosine. The 'KMSKS' region signature appears at 232-236; it reads KFGKT. Lys235 contacts ATP. An S4 RNA-binding domain is found at 353-418; sequence QDLVELLIES…KKHFCLVKRA (66 aa).

It belongs to the class-I aminoacyl-tRNA synthetase family. TyrS type 1 subfamily. Homodimer.

It is found in the cytoplasm. The enzyme catalyses tRNA(Tyr) + L-tyrosine + ATP = L-tyrosyl-tRNA(Tyr) + AMP + diphosphate + H(+). Catalyzes the attachment of tyrosine to tRNA(Tyr) in a two-step reaction: tyrosine is first activated by ATP to form Tyr-AMP and then transferred to the acceptor end of tRNA(Tyr). The polypeptide is Tyrosine--tRNA ligase 1 (Vibrio parahaemolyticus serotype O3:K6 (strain RIMD 2210633)).